Consider the following 794-residue polypeptide: DNA ligase (794 aa).

NAD(+) contacts are provided by residues 35–39 (DAEYD), 84–85 (SL), and glutamate 126. Lysine 128 (N6-AMP-lysine intermediate) is an active-site residue. NAD(+)-binding residues include arginine 149, glutamate 186, lysine 302, and lysine 326. Zn(2+) contacts are provided by cysteine 420, cysteine 423, cysteine 450, and cysteine 456. Residues 711 to 794 (VEGLPLAGQT…KLFDEHGVAR (84 aa)) form the BRCT domain.

Belongs to the NAD-dependent DNA ligase family. LigA subfamily. Mg(2+) serves as cofactor. Requires Mn(2+) as cofactor.

It carries out the reaction NAD(+) + (deoxyribonucleotide)n-3'-hydroxyl + 5'-phospho-(deoxyribonucleotide)m = (deoxyribonucleotide)n+m + AMP + beta-nicotinamide D-nucleotide.. Functionally, DNA ligase that catalyzes the formation of phosphodiester linkages between 5'-phosphoryl and 3'-hydroxyl groups in double-stranded DNA using NAD as a coenzyme and as the energy source for the reaction. It is essential for DNA replication and repair of damaged DNA. This is DNA ligase from Pseudomonas aeruginosa (strain UCBPP-PA14).